An 86-amino-acid chain; its full sequence is Small ribosomal subunit protein bS16 (86 aa).

This sequence belongs to the bacterial ribosomal protein bS16 family.

This is Small ribosomal subunit protein bS16 from Borrelia garinii subsp. bavariensis (strain ATCC BAA-2496 / DSM 23469 / PBi) (Borreliella bavariensis).